A 581-amino-acid chain; its full sequence is 2-isopropylmalate synthase (581 aa).

Positions 32-306 (PQWCAVDLRD…DPQLDFSDIK (275 aa)) constitute a Pyruvate carboxyltransferase domain. Positions 41, 245, 247, and 281 each coordinate Mg(2+). The interval 455–581 (RSAPVEQIAL…KHQQLQNGGV (127 aa)) is regulatory domain.

Belongs to the alpha-IPM synthase/homocitrate synthase family. LeuA type 2 subfamily. Homodimer. Mg(2+) is required as a cofactor.

It is found in the cytoplasm. It catalyses the reaction 3-methyl-2-oxobutanoate + acetyl-CoA + H2O = (2S)-2-isopropylmalate + CoA + H(+). It participates in amino-acid biosynthesis; L-leucine biosynthesis; L-leucine from 3-methyl-2-oxobutanoate: step 1/4. Functionally, catalyzes the condensation of the acetyl group of acetyl-CoA with 3-methyl-2-oxobutanoate (2-ketoisovalerate) to form 3-carboxy-3-hydroxy-4-methylpentanoate (2-isopropylmalate). The polypeptide is 2-isopropylmalate synthase (Corynebacterium efficiens (strain DSM 44549 / YS-314 / AJ 12310 / JCM 11189 / NBRC 100395)).